The primary structure comprises 364 residues: Formimidoylglutamase (364 aa).

Mn(2+) contacts are provided by His-133, Asp-189, His-191, Asp-193, Asp-286, and Asp-288.

It belongs to the arginase family. Mn(2+) serves as cofactor.

The catalysed reaction is N-formimidoyl-L-glutamate + H2O = formamide + L-glutamate. Its pathway is amino-acid degradation; L-histidine degradation into L-glutamate; L-glutamate from N-formimidoyl-L-glutamate (hydrolase route): step 1/1. In terms of biological role, catalyzes the conversion of N-formimidoyl-L-glutamate to L-glutamate and formamide. The sequence is that of Formimidoylglutamase from Photobacterium profundum (strain SS9).